The following is a 290-amino-acid chain: S-adenosylmethionine decarboxylase proenzyme (290 aa).

S138 functions as the Schiff-base intermediate with substrate; via pyruvic acid in the catalytic mechanism. Position 138 is a pyruvic acid (Ser); by autocatalysis (S138). The Proton acceptor; for processing activity role is filled by H143. C166 serves as the catalytic Proton donor; for catalytic activity.

Belongs to the prokaryotic AdoMetDC family. Type 2 subfamily. Heterooctamer of four alpha and four beta chains arranged as a tetramer of alpha/beta heterodimers. It depends on pyruvate as a cofactor. Is synthesized initially as an inactive proenzyme. Formation of the active enzyme involves a self-maturation process in which the active site pyruvoyl group is generated from an internal serine residue via an autocatalytic post-translational modification. Two non-identical subunits are generated from the proenzyme in this reaction, and the pyruvate is formed at the N-terminus of the alpha chain, which is derived from the carboxyl end of the proenzyme. The post-translation cleavage follows an unusual pathway, termed non-hydrolytic serinolysis, in which the side chain hydroxyl group of the serine supplies its oxygen atom to form the C-terminus of the beta chain, while the remainder of the serine residue undergoes an oxidative deamination to produce ammonia and the pyruvoyl group blocking the N-terminus of the alpha chain.

The enzyme catalyses S-adenosyl-L-methionine + H(+) = S-adenosyl 3-(methylsulfanyl)propylamine + CO2. Its pathway is amine and polyamine biosynthesis; S-adenosylmethioninamine biosynthesis; S-adenosylmethioninamine from S-adenosyl-L-methionine: step 1/1. Catalyzes the decarboxylation of S-adenosylmethionine to S-adenosylmethioninamine (dcAdoMet), the propylamine donor required for the synthesis of the polyamines spermine and spermidine from the diamine putrescine. The chain is S-adenosylmethionine decarboxylase proenzyme from Heliobacterium modesticaldum (strain ATCC 51547 / Ice1).